The primary structure comprises 110 residues: Large ribosomal subunit protein uL22 (110 aa).

Belongs to the universal ribosomal protein uL22 family. As to quaternary structure, part of the 50S ribosomal subunit.

This protein binds specifically to 23S rRNA; its binding is stimulated by other ribosomal proteins, e.g. L4, L17, and L20. It is important during the early stages of 50S assembly. It makes multiple contacts with different domains of the 23S rRNA in the assembled 50S subunit and ribosome. Functionally, the globular domain of the protein is located near the polypeptide exit tunnel on the outside of the subunit, while an extended beta-hairpin is found that lines the wall of the exit tunnel in the center of the 70S ribosome. The chain is Large ribosomal subunit protein uL22 from Klebsiella pneumoniae (strain 342).